Here is a 663-residue protein sequence, read N- to C-terminus: Alpha-amylase MalA (663 aa).

Disordered regions lie at residues 1-28 and 80-135; these read MHHP…PTAT and GTLE…LTLR. Residues 92-111 show a composition bias toward gly residues; the sequence is RSGGHSGGVSGGRSGPGRSG. Residue Asp411 is the Nucleophile of the active site. The Proton donor role is filled by Glu440.

It belongs to the glycosyl hydrolase 13 family.

Its subcellular location is the cytoplasm. It catalyses the reaction Endohydrolysis of (1-&gt;4)-alpha-D-glucosidic linkages in polysaccharides containing three or more (1-&gt;4)-alpha-linked D-glucose units.. It functions in the pathway glycan degradation; starch degradation. Stable and active over a broad range of NaCl concentrations (0.5 to 4.2 M NaCl), with maximal activity at 2.6 M NaCl. 83% and 94% of the maximum activity at 0.6 and 4.2 M NaCl, respectively. Active and stable also in KCl. Functionally, alpha-amylase that cleaves starch into oligosaccharides, the first step in starch degradation. Endo-acting enzyme which prefers a linear polysaccharide to branched polysaccharides hydrolyzing alpha-1,4 glucosidic bonds efficiently. Also has transglycosylation activity, but does not act on alpha-1,6 bonds. Higher activities of 100%, 79% and 67.8% against amylose, soluble starch and amylopectin, respectively. Lower activity of 22% against glycogen and faint or no activity against alpha-, beta- and gamma-cyclodextrin. This chain is Alpha-amylase MalA, found in Haloarcula japonica (strain ATCC 49778 / DSM 6131 / JCM 7785 / NBRC 101032 / NCIMB 13157 / TR-1).